Reading from the N-terminus, the 259-residue chain is MSLQPAPASRVFMELVPWADRGRENHPISAAEAQPIGRRPHVAEAHPGAREVHVSGAAEVSASPDRALVTVRVSSTKEVSAEAKKSVCRRLDYITQSLQQQGFQAENVTVTKNIRRVENAYHMEAEVCITFTEFGKMQNICNFLVEKLDSSVVISPPEFYHTPGSVENLRRQACLVAVENAWRKAQEVCDLVGQTLGKPLLIKEEETKDWEGQTDDHQLSRLPGTLTVQQKIKSATIHAASKVFITFEVKGKEKKKKHL.

A phosphoserine mark is found at Ser-55, Ser-61, Ser-63, and Ser-234. Phosphothreonine is present on Thr-236. Residues 239–259 (AASKVFITFEVKGKEKKKKHL) form a required for nuclear localization (NLS) region. The residue at position 241 (Ser-241) is a Phosphoserine. A Phosphothreonine modification is found at Thr-246.

Belongs to the IRAK1BP1 family. As to quaternary structure, interacts with IRAK1 and RELA. Interacts with HSPA8 and HSPA1. May interact with Listeria monocytogenes actA. In terms of processing, phosphorylation at Ser-55, Ser-61 and/or Ser-63 is required for full activity. Phosphorylated on at least one of Ser-234, Thr-236, Ser-241 and Thr-246 upon TNF-alpha activation, which favors nuclear translocation. As to expression, expressed in testis, brain, kidney, liver and heart.

It localises to the cytoplasm. Its subcellular location is the nucleus. Functionally, component of the IRAK1-dependent TNFRSF1A signaling pathway that leads to NF-kappa-B activation and is required for cell survival. Acts by enhancing RELA transcriptional activity. The protein is Interleukin-1 receptor-associated kinase 1-binding protein 1 (Irak1bp1) of Mus musculus (Mouse).